We begin with the raw amino-acid sequence, 98 residues long: Mu-type opioid receptor (98 aa).

Residues 1–9 (YTKMKTATN) are Cytoplasmic-facing. The helical transmembrane segment at 10–34 (IYIFNLALADALATSTLPFQSVNYL) threads the bilayer. The Extracellular segment spans residues 35–45 (MGTWPFGTILC). A helical membrane pass occupies residues 46 to 68 (KIVISIDYYNMFTSIFTLCTMSV). Residues 69-88 (DRYIAVCHPVKALDFRTPRN) lie on the Cytoplasmic side of the membrane. Y71 is modified (phosphotyrosine). The chain crosses the membrane as a helical span at residues 89-98 (AKTVNVCNWI).

It belongs to the G-protein coupled receptor 1 family. As to quaternary structure, forms homooligomers and heterooligomers with other GPCRs, such as OPRD1, OPRK1, OPRL1, NPFFR2, ADRA2A, SSTR2, CNR1 and CCR5 (probably in dimeric forms). Interacts with heterotrimeric G proteins; interaction with a heterotrimeric complex containing GNAI1, GNB1 and GNG2 stabilizes the active conformation of the receptor and increases its affinity for endomorphin-2, the synthetic opioid peptide DAMGO and for morphinan agonists. Interacts with PPL; the interaction disrupts agonist-mediated G-protein activation. Interacts (via C-terminus) with DNAJB4 (via C-terminus). Interacts with calmodulin; the interaction inhibits the constitutive activity of OPRM1; it abolishes basal and attenuates agonist-stimulated G-protein coupling. Interacts with FLNA, PLD2, RANBP9 and WLS and GPM6A. Interacts with RTP4. Interacts with SYP and GNAS. Interacts with RGS9, RGS17, RGS20, RGS4, PPP1R9B and HINT1. Phosphorylated. Differentially phosphorylated in basal and agonist-induced conditions. Agonist-mediated phosphorylation modulates receptor internalization. Phosphorylated by GRK2 in a agonist-dependent manner. Phosphorylated on tyrosine residues; the phosphorylation is involved in agonist-induced G-protein-independent receptor down-regulation. Post-translationally, phosphorylated. Differentially phosphorylated in basal and agonist-induced conditions. Agonist-mediated phosphorylation modulates receptor internalization. Phosphorylated by GRK2 in a agonist-dependent manner. Phosphorylated on tyrosine residues; the phosphorylation is involved in agonist-induced G-protein-independent receptor down-regulation. In terms of processing, ubiquitinated. A basal ubiquitination seems not to be related to degradation. Ubiquitination is increased upon formation of OPRM1:OPRD1 oligomers leading to proteasomal degradation; the ubiquitination is diminished by RTP4.

Its subcellular location is the cell membrane. The protein localises to the cell projection. It is found in the axon. The protein resides in the perikaryon. It localises to the dendrite. Its subcellular location is the endosome. Its function is as follows. Receptor for endogenous opioids such as beta-endorphin and endomorphin. Receptor for natural and synthetic opioids including morphine, heroin, DAMGO, fentanyl, etorphine, buprenorphin and methadone. Also activated by enkephalin peptides, such as Met-enkephalin or Met-enkephalin-Arg-Phe, with higher affinity for Met-enkephalin-Arg-Phe. Agonist binding to the receptor induces coupling to an inactive GDP-bound heterotrimeric G-protein complex and subsequent exchange of GDP for GTP in the G-protein alpha subunit leading to dissociation of the G-protein complex with the free GTP-bound G-protein alpha and the G-protein beta-gamma dimer activating downstream cellular effectors. The agonist- and cell type-specific activity is predominantly coupled to pertussis toxin-sensitive G(i) and G(o) G alpha proteins, GNAI1, GNAI2, GNAI3 and GNAO1, and to a lesser extent to pertussis toxin-insensitive G alpha proteins GNAZ and GNA15. They mediate an array of downstream cellular responses, including inhibition of adenylate cyclase activity and both N-type and L-type calcium channels, activation of inward rectifying potassium channels, mitogen-activated protein kinase (MAPK), phospholipase C (PLC), phosphoinositide/protein kinase (PKC), phosphoinositide 3-kinase (PI3K) and regulation of NF-kappa-B. Also couples to adenylate cyclase stimulatory G alpha proteins. The selective temporal coupling to G-proteins and subsequent signaling can be regulated by RGSZ proteins, such as RGS9, RGS17 and RGS4. Phosphorylation by members of the GPRK subfamily of Ser/Thr protein kinases and association with beta-arrestins is involved in short-term receptor desensitization. Beta-arrestins associate with the GPRK-phosphorylated receptor and uncouple it from the G-protein thus terminating signal transduction. The phosphorylated receptor is internalized through endocytosis via clathrin-coated pits which involves beta-arrestins. The activation of the ERK pathway occurs either in a G-protein-dependent or a beta-arrestin-dependent manner and is regulated by agonist-specific receptor phosphorylation. Acts as a class A G-protein coupled receptor (GPCR) which dissociates from beta-arrestin at or near the plasma membrane and undergoes rapid recycling. Receptor down-regulation pathways are varying with the agonist and occur dependent or independent of G-protein coupling. Endogenous ligands induce rapid desensitization, endocytosis and recycling. Heterooligomerization with other GPCRs can modulate agonist binding, signaling and trafficking properties. Involved in neurogenesis. This chain is Mu-type opioid receptor (OPRM1), found in Cavia porcellus (Guinea pig).